The following is a 279-amino-acid chain: Proteasome subunit beta 2 (279 aa).

The propeptide at 1 to 53 (MAAAFDPSGRFPDLFTSVGTSSFSAFLSKAAPELLPGRRPLPPGMATGLTPHA) is removed in mature form; by autocatalysis. Thr-54 serves as the catalytic Nucleophile.

Belongs to the peptidase T1B family. As to quaternary structure, the 20S proteasome core is composed of 14 alpha and 14 beta subunits that assemble into four stacked heptameric rings, resulting in a barrel-shaped structure. The two inner rings, each composed of seven catalytic beta subunits, are sandwiched by two outer rings, each composed of seven alpha subunits. The catalytic chamber with the active sites is on the inside of the barrel. Has a gated structure, the ends of the cylinder being occluded by the N-termini of the alpha-subunits. Is capped by the proteasome-associated ATPase, ARC.

Its subcellular location is the cytoplasm. The catalysed reaction is Cleavage of peptide bonds with very broad specificity.. The protein operates within protein degradation; proteasomal Pup-dependent pathway. The formation of the proteasomal ATPase ARC-20S proteasome complex, likely via the docking of the C-termini of ARC into the intersubunit pockets in the alpha-rings, may trigger opening of the gate for substrate entry. Interconversion between the open-gate and close-gate conformations leads to a dynamic regulation of the 20S proteasome proteolysis activity. Functionally, component of the proteasome core, a large protease complex with broad specificity involved in protein degradation. This Salinispora tropica (strain ATCC BAA-916 / DSM 44818 / JCM 13857 / NBRC 105044 / CNB-440) protein is Proteasome subunit beta 2.